A 166-amino-acid chain; its full sequence is Putative 4-hydroxy-4-methyl-2-oxoglutarate aldolase (166 aa).

Residues 74-77 and Arg-96 contribute to the substrate site; that span reads GDQI. Position 97 (Asp-97) interacts with a divalent metal cation.

The protein belongs to the class II aldolase/RraA-like family. Homotrimer. It depends on a divalent metal cation as a cofactor.

It catalyses the reaction 4-hydroxy-4-methyl-2-oxoglutarate = 2 pyruvate. It carries out the reaction oxaloacetate + H(+) = pyruvate + CO2. Catalyzes the aldol cleavage of 4-hydroxy-4-methyl-2-oxoglutarate (HMG) into 2 molecules of pyruvate. Also contains a secondary oxaloacetate (OAA) decarboxylase activity due to the common pyruvate enolate transition state formed following C-C bond cleavage in the retro-aldol and decarboxylation reactions. The polypeptide is Putative 4-hydroxy-4-methyl-2-oxoglutarate aldolase (Xanthomonas campestris pv. campestris (strain 8004)).